Here is a 384-residue protein sequence, read N- to C-terminus: Probable UDP-galactopyranose mutase (384 aa).

The first 19 residues, 1–19 (MNNKNIMIVGAGFSGVVIA), serve as a signal peptide directing secretion. FAD-binding positions include Ser-14, 33 to 34 (DR), Asn-41, and 60 to 61 (HI). The UDP-alpha-D-galactose site is built by Asn-84, Phe-151, Thr-156, Trp-160, and Tyr-185. Residue Phe-219 coordinates FAD. Positions 270, 280, and 314 each coordinate UDP-alpha-D-galactose. Arg-343 lines the FAD pocket. A UDP-alpha-D-galactose-binding site is contributed by Tyr-349. Residue 350 to 355 (LDMDVT) coordinates FAD.

It belongs to the UDP-galactopyranose/dTDP-fucopyranose mutase family. In terms of assembly, homodimer. FAD is required as a cofactor.

It carries out the reaction UDP-alpha-D-galactose = UDP-alpha-D-galactofuranose. It functions in the pathway bacterial outer membrane biogenesis; LPS O-antigen biosynthesis. In terms of biological role, catalyzes the interconversion through a 2-keto intermediate of uridine diphosphogalactopyranose (UDP-GalP) into uridine diphosphogalactofuranose (UDP-GalF). This Klebsiella pneumoniae protein is Probable UDP-galactopyranose mutase (rfbD).